Here is a 351-residue protein sequence, read N- to C-terminus: Nitronate monooxygenase (351 aa).

Residues Leu-21, Asn-69, Gln-176, Gly-181, Gly-218, and 237–240 (QMGT) contribute to the FMN site.

This sequence belongs to the nitronate monooxygenase family. NMO class I subfamily. FMN serves as cofactor.

It catalyses the reaction 3 propionate 3-nitronate + 3 O2 + H2O = 3 3-oxopropanoate + 2 nitrate + nitrite + H2O2 + 3 H(+). Its function is as follows. Nitronate monooxygenase that uses molecular oxygen to catalyze the oxidative denitrification of alkyl nitronates. The toxin propionate 3-nitronate (P3N) is the best substrate (and the presumed physiological substrate), but this enzyme is also active on other primary and secondary nitronates such as propyl-1-nitronate, ethylnitronate, pentyl-1-nitronate, butyl-1-nitronate and propyl-2-nitronate. Is likely involved in the degradation of P3N, that allows P.aeruginosa PAO1 to grow on 3-nitropropionate/P3N as the sole nitrogen source. Also functions in the detoxification of P3N, a metabolic poison produced by plants and fungi as a defense mechanism. Cannot oxidize nitroalkanes such as 3-nitropropionate, nitroethane, 1-nitropropane, 1-nitrobutane, 1-nitropentane, or 2-nitropropane. This chain is Nitronate monooxygenase, found in Pseudomonas aeruginosa (strain ATCC 15692 / DSM 22644 / CIP 104116 / JCM 14847 / LMG 12228 / 1C / PRS 101 / PAO1).